Consider the following 306-residue polypeptide: Acetylglutamate kinase (306 aa).

Substrate contacts are provided by residues 79–80, Arg-101, and Asn-203; that span reads GG.

The protein belongs to the acetylglutamate kinase family. ArgB subfamily.

The protein localises to the cytoplasm. The catalysed reaction is N-acetyl-L-glutamate + ATP = N-acetyl-L-glutamyl 5-phosphate + ADP. Its pathway is amino-acid biosynthesis; L-arginine biosynthesis; N(2)-acetyl-L-ornithine from L-glutamate: step 2/4. In terms of biological role, catalyzes the ATP-dependent phosphorylation of N-acetyl-L-glutamate. The polypeptide is Acetylglutamate kinase (Polaromonas naphthalenivorans (strain CJ2)).